The following is a 155-amino-acid chain: Ribosome maturation factor RimP (155 aa).

It belongs to the RimP family.

It is found in the cytoplasm. In terms of biological role, required for maturation of 30S ribosomal subunits. The sequence is that of Ribosome maturation factor RimP from Desulforapulum autotrophicum (strain ATCC 43914 / DSM 3382 / VKM B-1955 / HRM2) (Desulfobacterium autotrophicum).